We begin with the raw amino-acid sequence, 136 residues long: Galectin-7 (136 aa).

The Galectin domain maps to 6-136 (HKSSLPEGIR…DVQLDSVRIF (131 aa)). Residue 70 to 76 (WGREERG) participates in a beta-D-galactoside binding.

In terms of assembly, monomer. In terms of tissue distribution, mainly expressed in stratified squamous epithelium.

It is found in the cytoplasm. Its subcellular location is the nucleus. The protein resides in the secreted. Functionally, could be involved in cell-cell and/or cell-matrix interactions necessary for normal growth control. Pro-apoptotic protein that functions intracellularly upstream of JNK activation and cytochrome c release. In Homo sapiens (Human), this protein is Galectin-7 (LGALS7).